The following is a 90-amino-acid chain: Putative F-box protein At5g16285 (90 aa).

The F-box domain occupies 1–46 (MRIESLLQHDVVERILERLAVNSLPRFKAVSKQWKSTIESQFFQGK).

The sequence is that of Putative F-box protein At5g16285 from Arabidopsis thaliana (Mouse-ear cress).